The primary structure comprises 330 residues: Complement factor H-related protein 1 (330 aa).

A signal peptide spans 1 to 18 (MWLLVSVILISRISSVGG). Sushi domains follow at residues 22–84 (FCDF…PKCL), 85–142 (RLCF…KCRS), 145–203 (TSCV…QCKD), 206–264 (GKCG…KCLH), and 273–329 (MENY…TCAK). Intrachain disulfides connect Cys-23/Cys-72, Cys-55/Cys-83, Cys-87/Cys-129, Cys-114/Cys-140, Cys-147/Cys-190, Cys-176/Cys-201, Cys-208/Cys-251, Cys-237/Cys-262, Cys-266/Cys-317, and Cys-300/Cys-327. Asn-126 carries an N-linked (GlcNAc...) asparagine glycan. Residue Asn-194 is glycosylated (N-linked (GlcNAc...) asparagine).

In terms of assembly, head-to-tail homodimer and heterodimer with CFHR2 or CFHR5. (Microbial infection) Interacts with C.albicans GPD2; the interaction is direct and leads to the degradation of C3. N-glycosylated. Two forms are observed; one with a single side chain and the other with two. Expressed by the liver and secreted in plasma.

Its subcellular location is the secreted. Functionally, involved in complement regulation. The dimerized forms have avidity for tissue-bound complement fragments and efficiently compete with the physiological complement inhibitor CFH. Can associate with lipoproteins and may play a role in lipid metabolism. The protein is Complement factor H-related protein 1 (CFHR1) of Homo sapiens (Human).